The sequence spans 505 residues: L-arabinose isomerase (505 aa).

Glu308, Glu335, His352, and His453 together coordinate Mn(2+).

It belongs to the arabinose isomerase family. Mn(2+) serves as cofactor.

It catalyses the reaction beta-L-arabinopyranose = L-ribulose. It participates in carbohydrate degradation; L-arabinose degradation via L-ribulose; D-xylulose 5-phosphate from L-arabinose (bacterial route): step 1/3. In terms of biological role, catalyzes the conversion of L-arabinose to L-ribulose. This chain is L-arabinose isomerase, found in Bifidobacterium animalis subsp. lactis (strain AD011).